A 180-amino-acid polypeptide reads, in one-letter code: Zinc finger protein 740 (180 aa).

A compositionally biased stretch (polar residues) spans 1-11 (MMLSQIASKQA). The disordered stretch occupies residues 1-62 (MMLSQIASKQ…KEDDSLAEAS (62 aa)). A Glycyl lysine isopeptide (Lys-Gly) (interchain with G-Cter in SUMO2) cross-link involves residue Lys9. The residue at position 19 (Ser19) is a Phosphoserine. The segment covering 31-56 (CKPRFDLSSKGHRKDSDKSRNRKEDD) has biased composition (basic and acidic residues). 2 consecutive C2H2-type zinc fingers follow at residues 88 to 110 (FICEHCFGAFRSSYHLKRHVLIH) and 116 to 138 (FECDVCDMRFIQKYHLERHKRVH). The C2H2-type 3; atypical zinc-finger motif lies at 144–166 (YQCERCHQCFSRTDRLLRHKRMC).

The protein belongs to the krueppel C2H2-type zinc-finger protein family.

The protein resides in the nucleus. In terms of biological role, may be involved in transcriptional regulation. The polypeptide is Zinc finger protein 740 (Znf740) (Mus musculus (Mouse)).